The sequence spans 346 residues: Nitrilase 1 (346 aa).

Ser2 bears the N-acetylserine mark. The CN hydrolase domain maps to 25 to 297 (VRVTIVQSST…EGLVTADIDL (273 aa)). The Proton acceptor role is filled by Glu65. Lys152 functions as the Proton donor in the catalytic mechanism. Cys186 acts as the Nucleophile in catalysis.

Belongs to the carbon-nitrogen hydrolase superfamily. Nitrilase family. In terms of assembly, interacts with DEK3. Expressed in cotyledons, hypocotyls, leaves, roots, stems, flowers and siliques.

The catalysed reaction is a nitrile + 2 H2O = a carboxylate + NH4(+). Its function is as follows. Can convert indole-3-acetonitrile to the plant hormone indole-3-acetic acid. This Arabidopsis thaliana (Mouse-ear cress) protein is Nitrilase 1.